Reading from the N-terminus, the 1312-residue chain is MMAHNKNDLTNINTKTTAPTTTTTEQQPEQQQQQPEQQQQEKQNNNNNNNNNNNNNNNINNNENNENNNNDIINNKINLLDELVAAAELKGRYTQIQLEELKSKLDRTSSALNVDQDTIKLAWCLLENMQLVSVDTSEQFQKQIVACSLFICGNKKFSSLLYNLNQPSSSSFQPDNNSKIKGRKIRKTNNSKNKNNDSNEEEEETTTDTEEEEEEDTLLNENNNSINKNSSNNNELLVSIRSCINESGGDSQFLQNSVFLSQLLKHFEGEIKLSQFFDTLRSFISNLRLGNAFEEQGRQLEQSFNTLNNLYRKYEQIFFTLFHPTENYILKTTQQHNYNNNSNNNNNNNNNNNNNNNNNRTNEDYLLSIGWLIFLFCKNKLFTKDSPDFVQSLHLLLCIINFIYVNTSISELKKIPQGVQIIDTATGDILLYLAKSIPCNLDDLSNVNQNIFSTYSNLLINNSILKLFDNNNNNNNNNNNNNNNSDGIKSIFNNSSIIKDNYNSLNKSYELYYYANGDIDERLFYSFDHDIYVLNNNNNNQNNNNNNNNHNNNYYNNNNNNNNNNNNNNHLNYQYSSLLPPSTPTTPSRYGSSSSSGGGGGGNLRKNIYGTPSKSLSAGNLGSVIPQTPISLTLTLESWLKVEIQNYRDPNPSLNLINILKSADQPQQTSEVDKMIERVSSLTNNTDSLFSIGGIDDHQQQQQQQQEVKQRRKNMAIQLYYCLLEKLIKFEQNTSSNINVLLNHEDFHKSLLSNSFEIIAYVYKMEGLYFPHFINVFKLHPFSYLRLIDLVLKVDADLPKLLAQHFSQIEEKILEKYVWSNNSTVFSTIKSHDFQNIFNSNGVGAAITTHLRPTQVFSTPTKNQNNNPFRNQQLINTNIPNTPTKKNPFIQNFIKKVSTLIIAKCRKLIHAMGLSSDYVVQIYQVMIKILIDETLLFKNREIDVLLICSIYAICKVNSKNITFKAIIDKSCISAKVYKEVYIGNDENNNNNNNNNNNNNNNNNNNNNNINNNNNNNENNNNNNNPVKGDIILFYNKIFLTKMDPYIHEVFSKYQQQQQHQYQQPLQNLPPPLLNQNSPKKWNPLFHTPTKNQNNNPYNSNNNTPNKFSSSIPLSPQKGVNYNSSFSVNSMVTISPMKQHTPISSSYTYIVAKSPSKELFQINQCLNKKKNDEMVPPPPTTPSSINNNNNNNNNNNNNNNNNNNNNSNDNNNNNNNNNNNNNNNNSNNNSNNNNNTEKKMVGKRLLFDYEESPSTPSSSSSPTILNNNKKNNNNNKSENVDDPGNNSPSSSPLSSSSSSSSSSSSGGRKRLKS.

Disordered regions lie at residues 1–67 (MMAH…NNEN), 168–231 (SSSS…KNSS), 336–359 (HNYN…NNNN), 536–611 (NNNN…IYGT), 987–1023 (NNNN…NNNN), 1168–1236 (KKND…NNTE), and 1249–1312 (EESP…RLKS). The span at 10 to 67 (TNINTKTTAPTTTTTEQQPEQQQQQPEQQQQEKQNNNNNNNNNNNNNNNINNNENNEN) shows a compositional bias: low complexity. Positions 36-117 (EQQQQEKQNN…TSSALNVDQD (82 aa)) form a coiled coil. Positions 168–179 (SSSSFQPDNNSK) are enriched in polar residues. The segment covering 180–189 (IKGRKIRKTN) has biased composition (basic residues). A coiled-coil region spans residues 195–230 (NNDSNEEEEETTTDTEEEEEEDTLLNENNNSINKNS). Residues 198–218 (SNEEEEETTTDTEEEEEEDTL) are compositionally biased toward acidic residues. Low complexity-rich tracts occupy residues 219–231 (LNEN…KNSS), 337–359 (NYNN…NNNN), and 536–595 (NNNN…SSSS). 3 stretches are compositionally biased toward low complexity: residues 1185-1234 (NNNN…NNNN), 1251-1275 (SPST…NNNK), and 1286-1305 (SPSS…SSSG).

Belongs to the retinoblastoma protein (RB) family.

It localises to the nucleus. In terms of biological role, key regulator of entry into cell division. Directly involved in heterochromatin formation by maintaining overall chromatin structure and, in particular, that of constitutive heterochromatin by stabilizing histone methylation. Controls histone H4 'Lys-20' trimethylation. Probably acts as a transcription repressor by recruiting chromatin-modifying enzymes to promoters. Plays a dual role, regulating cell-cycle progression and transcriptional events leading to terminal differentiation. In the absence of a G1 phase, functions in late G2 controlling the expression of both S-phase and mitotic genes. Controls stalk/spore preference by suppressing the DIF response in cells destined for the spore pathway. DIF is a chlorinated hydroxyphenone made by cells of spore pathway that promotes stalk differentiation. This chain is Retinoblastoma-like protein A, found in Dictyostelium discoideum (Social amoeba).